A 54-amino-acid polypeptide reads, in one-letter code: Large ribosomal subunit protein bL32c (54 aa).

Positions 1-25 are enriched in basic residues; that stretch reads MAVPKKRTSKAKKNSRKANWKRKAA. Positions 1–26 are disordered; sequence MAVPKKRTSKAKKNSRKANWKRKAAK.

The protein belongs to the bacterial ribosomal protein bL32 family.

Its subcellular location is the plastid. It localises to the chloroplast. In Thalassiosira pseudonana (Marine diatom), this protein is Large ribosomal subunit protein bL32c.